The chain runs to 50 residues: MQTLSSAPDPAVSVAVTILAVLLALTGFGLWTAFGPKAAKLTDPWDDHDD.

A helical transmembrane segment spans residues 14-34; that stretch reads VAVTILAVLLALTGFGLWTAF.

The protein belongs to the PsbN family.

The protein resides in the cellular thylakoid membrane. Functionally, may play a role in photosystem I and II biogenesis. In Prochlorococcus marinus subsp. pastoris (strain CCMP1986 / NIES-2087 / MED4), this protein is Protein PsbN.